A 114-amino-acid chain; its full sequence is Hydrogenase maturation factor HypA (114 aa).

Position 2 (H2) interacts with Ni(2+). Zn(2+)-binding residues include C70, C73, C86, and C89.

It belongs to the HypA/HybF family.

Involved in the maturation of [NiFe] hydrogenases. Required for nickel insertion into the metal center of the hydrogenase. This chain is Hydrogenase maturation factor HypA, found in Rippkaea orientalis (strain PCC 8801 / RF-1) (Cyanothece sp. (strain PCC 8801)).